Reading from the N-terminus, the 719-residue chain is DNA ligase (719 aa).

NAD(+) is bound by residues 42–46, 91–92, and glutamate 125; these read DAEYD and SL. The active-site N6-AMP-lysine intermediate is the lysine 127. Positions 148, 184, 300, and 324 each coordinate NAD(+). Zn(2+) contacts are provided by cysteine 429, cysteine 432, cysteine 447, and cysteine 453. The BRCT domain occupies 638 to 719; sequence TASSPIAEKI…WMRLIKGHNI (82 aa).

It belongs to the NAD-dependent DNA ligase family. LigA subfamily. The cofactor is Mg(2+). It depends on Mn(2+) as a cofactor.

The enzyme catalyses NAD(+) + (deoxyribonucleotide)n-3'-hydroxyl + 5'-phospho-(deoxyribonucleotide)m = (deoxyribonucleotide)n+m + AMP + beta-nicotinamide D-nucleotide.. Its function is as follows. DNA ligase that catalyzes the formation of phosphodiester linkages between 5'-phosphoryl and 3'-hydroxyl groups in double-stranded DNA using NAD as a coenzyme and as the energy source for the reaction. It is essential for DNA replication and repair of damaged DNA. The polypeptide is DNA ligase (Bartonella tribocorum (strain CIP 105476 / IBS 506)).